The primary structure comprises 91 residues: Small ribosomal subunit protein uS19 (91 aa).

The protein belongs to the universal ribosomal protein uS19 family.

Functionally, protein S19 forms a complex with S13 that binds strongly to the 16S ribosomal RNA. The sequence is that of Small ribosomal subunit protein uS19 from Pseudomonas syringae pv. tomato (strain ATCC BAA-871 / DC3000).